We begin with the raw amino-acid sequence, 450 residues long: Glucose-6-phosphate isomerase (450 aa).

Residue Thr-39 is modified to Phosphothreonine. The active-site Proton donor is Glu-291. Catalysis depends on residues His-312 and Lys-426.

This sequence belongs to the GPI family.

The protein resides in the cytoplasm. It carries out the reaction alpha-D-glucose 6-phosphate = beta-D-fructose 6-phosphate. It participates in carbohydrate biosynthesis; gluconeogenesis. Its pathway is carbohydrate degradation; glycolysis; D-glyceraldehyde 3-phosphate and glycerone phosphate from D-glucose: step 2/4. In terms of biological role, catalyzes the reversible isomerization of glucose-6-phosphate to fructose-6-phosphate. This chain is Glucose-6-phosphate isomerase, found in Bacillus cytotoxicus (strain DSM 22905 / CIP 110041 / 391-98 / NVH 391-98).